The primary structure comprises 113 residues: UPF0122 protein LSEI_1603 (113 aa).

This sequence belongs to the UPF0122 family.

Might take part in the signal recognition particle (SRP) pathway. This is inferred from the conservation of its genetic proximity to ftsY/ffh. May be a regulatory protein. The chain is UPF0122 protein LSEI_1603 from Lacticaseibacillus paracasei (strain ATCC 334 / BCRC 17002 / CCUG 31169 / CIP 107868 / KCTC 3260 / NRRL B-441) (Lactobacillus paracasei).